The chain runs to 295 residues: Shikimate dehydrogenase (NADP(+)) (295 aa).

Shikimate-binding positions include 21-23 (SLS) and Thr68. Lys72 serves as the catalytic Proton acceptor. Shikimate is bound by residues Asn93 and Asp108. Residues 132-136 (GAGGA), 156-161 (NRTPER), and Leu228 contribute to the NADP(+) site. Tyr230 contacts shikimate. Position 251 (Gly251) interacts with NADP(+).

Belongs to the shikimate dehydrogenase family. As to quaternary structure, homodimer.

The catalysed reaction is shikimate + NADP(+) = 3-dehydroshikimate + NADPH + H(+). It participates in metabolic intermediate biosynthesis; chorismate biosynthesis; chorismate from D-erythrose 4-phosphate and phosphoenolpyruvate: step 4/7. Its function is as follows. Involved in the biosynthesis of the chorismate, which leads to the biosynthesis of aromatic amino acids. Catalyzes the reversible NADPH linked reduction of 3-dehydroshikimate (DHSA) to yield shikimate (SA). The chain is Shikimate dehydrogenase (NADP(+)) from Moorella thermoacetica (strain ATCC 39073 / JCM 9320).